Here is a 179-residue protein sequence, read N- to C-terminus: MAVFKTTLWRLISGTLGIICLSLMATLGILLKNSFTKLSIEPAFTPGPNIELQKDSDCCSCQEKWVGYRCNCYFISSEQKTWNESRHLCASQKSSLLQLQNTDELDFMSSSQQFYWIGLSYSEEHTAWLWENGSALSQYLFPSFETFNPKNCIAYNPNGNALDESCEDKNRYICKQQLI.

The Cytoplasmic portion of the chain corresponds to 1–10 (MAVFKTTLWR). The chain crosses the membrane as a helical; Signal-anchor for type II membrane protein span at residues 11-31 (LISGTLGIICLSLMATLGILL). Over 32–179 (KNSFTKLSIE…NRYICKQQLI (148 aa)) the chain is Extracellular. Disulfide bonds link Cys58/Cys70 and Cys61/Cys72. Residues 68 to 175 (YRCNCYFISS…CEDKNRYICK (108 aa)) enclose the C-type lectin domain. N-linked (GlcNAc...) asparagine glycosylation is found at Asn83 and Asn132. 2 disulfides stabilise this stretch: Cys89–Cys174 and Cys152–Cys166.

In terms of assembly, can form disulfide-bonded heterodimer with NKG2 family members KLRC1 and KLRC2. KLRD1-KLRC1 heterodimer interacts with peptide-bound MHC-E-B2M heterotrimeric complex. KLRD1 plays a prominent role in directly interacting with MHC-E. KLRD1-KLRC1 interacts with much higher affinity with peptide-bound MHC-E-B2M than KLRD1-KLRC2. Interacts with the adapter protein TYROBP/DAP12; this interaction is required for cell surface expression and cell activation. Natural killer cells.

The protein localises to the cell membrane. Functionally, immune receptor involved in self-nonself discrimination. In complex with KLRC1 or KLRC2 on cytotoxic and regulatory lymphocyte subsets, recognizes non-classical major histocompatibility (MHC) class Ib molecule MHC-E loaded with self-peptides derived from the signal sequence of classical MHC class Ia and non-classical MHC class Ib molecules. Enables cytotoxic cells to monitor the expression of MHC class I molecules in healthy cells and to tolerate self. Primarily functions as a ligand binding subunit as it lacks the capacity to signal. Its function is as follows. KLRD1-KLRC1 acts as an immune inhibitory receptor. Key inhibitory receptor on natural killer (NK) cells that regulates their activation and effector functions. Dominantly counteracts T cell receptor signaling on a subset of memory/effector CD8-positive T cells as part of an antigen-driven response to avoid autoimmunity. On intraepithelial CD8-positive gamma-delta regulatory T cells triggers TGFB1 secretion, which in turn limits the cytotoxic programming of intraepithelial CD8-positive alpha-beta T cells, distinguishing harmless from pathogenic antigens. In MHC-E-rich tumor microenvironment, acts as an immune inhibitory checkpoint and may contribute to progressive loss of effector functions of NK cells and tumor-specific T cells, a state known as cell exhaustion. Upon MHC-E-peptide binding, transmits intracellular signals through KLRC1 immunoreceptor tyrosine-based inhibition motifs (ITIMs) by recruiting INPP5D/SHIP-1 and INPPL1/SHIP-2 tyrosine phosphatases to ITIMs, and ultimately opposing signals transmitted by activating receptors through dephosphorylation of proximal signaling molecules. KLRD1-KLRC2 acts as an immune activating receptor. On cytotoxic lymphocyte subsets recognizes MHC-E loaded with signal sequence-derived peptides from non-classical MHC class Ib MHC-G molecules, likely playing a role in the generation and effector functions of adaptive NK cells and in maternal-fetal tolerance during pregnancy. Regulates the effector functions of terminally differentiated cytotoxic lymphocyte subsets, and in particular may play a role in adaptive NK cell response to viral infection. Upon MHC-E-peptide binding, transmits intracellular signals via the adapter protein TYROBP/DAP12, triggering the phosphorylation of proximal signaling molecules and cell activation. The polypeptide is Natural killer cells antigen CD94 (KLRD1) (Pan troglodytes (Chimpanzee)).